The primary structure comprises 441 residues: Serine/threonine-protein kinase prk-2 (441 aa).

One can recognise a Protein kinase domain in the interval 31-285; the sequence is YKLKAELGRG…LEAILNHPWV (255 aa). Residues 37–45 and Lys60 contribute to the ATP site; that span reads LGRGGFGVV. The active-site Proton acceptor is Asp158. Residues 301–364 form a disordered region; the sequence is QKKTSESSDD…NQKKPNHKEF (64 aa). Residues 303-320 are compositionally biased toward basic and acidic residues; the sequence is KTSESSDDHHSETLGDHS. Positions 328–338 are enriched in polar residues; the sequence is PPTSSVSQQPG.

This sequence belongs to the protein kinase superfamily. Ser/Thr protein kinase family. PIM subfamily. It depends on Mg(2+) as a cofactor.

The enzyme catalyses L-seryl-[protein] + ATP = O-phospho-L-seryl-[protein] + ADP + H(+). It carries out the reaction L-threonyl-[protein] + ATP = O-phospho-L-threonyl-[protein] + ADP + H(+). Functionally, involved in the negative regulation of synaptic differentiation in PLM neurons. This is Serine/threonine-protein kinase prk-2 from Caenorhabditis elegans.